Reading from the N-terminus, the 908-residue chain is Chloride channel protein 2 (908 aa).

Topologically, residues 1 to 95 (MAAATAAAAA…RCHKFLVSRV (95 aa)) are cytoplasmic. Residues 24-42 (QYEQTLMYGRYTQELGAFA) are essential for channel gating by both voltage and cell volume. Threonine 28 is modified (phosphothreonine). The modulates channel gating by both voltage and cell volume stretch occupies residues 44–57 (EEAARIRLGGPEPW). The next 2 membrane-spanning stretches (helical) occupy residues 96–129 (GEDWIFLVLLGLLMALVSWAMDYAIAVCLQAQQW) and 138–163 (ILLQYLAWVTYPVVLITFSAGFTQIL). Residues 169-173 (GSGIP) carry the Selectivity filter part_1 motif. Serine 170 serves as a coordination point for chloride. Residues 172 to 179 (IPEMKTIL) constitute an intramembrane region (helical). A run of 2 helical transmembrane segments spans residues 188–206 (LTLKTFVAKVIGLTCALGS) and 213–231 (EGPFVHIASMCAALLSKFL). The short motif at 211–215 (GKEGP) is the Selectivity filter part_2 element. 2 intramembrane regions (helical) span residues 247 to 259 (MLAAACAVGVGCC) and 263 to 271 (PIGGVLFSI). 5 helical membrane-spanning segments follow: residues 283-303 (YWRGFFAATFSAFIFRVLAVW), 329-357 (LPAFAVIGIASGFGGALFVYLNRKIVQVM), 366-385 (FLMRKRLLFPALVTLLISTL), 437-457 (ANVFLTLVIFILMKFWMSALA), and 465-488 (GAFMPVFVIGAAFGRLVGESMAAW). The short motif at 465–469 (GAFMP) is the Selectivity filter part_3 element. Phenylalanine 467 contributes to the chloride binding site. An intramembrane region (helical) is located at residues 505–519 (GGYAVVGAAALAGAV). Positions 520 to 521 (TH) form an intramembrane region, note=Loop between two helices. The segment at residues 522 to 533 (TVSTAVIVFELT) is an intramembrane region (helical). Residues 534 to 538 (GQIAH) constitute an intramembrane region (note=Loop between two helices). A helical transmembrane segment spans residues 539–556 (ILPVMIAVILANAVAQSL). Over 557 to 908 (QPSLYDSIIR…TPSDSDDKCQ (352 aa)) the chain is Cytoplasmic. A chloride-binding site is contributed by tyrosine 561. The 59-residue stretch at 592–650 (MVRDVPHVALSCTFRDLRLALHRTKGRMLALVESPESMILLGSIERSQVVALLGAQLSP) folds into the CBS 1 domain. The span at 653–662 (RRQHMQKLRK) shows a compositional bias: basic residues. The interval 653–722 (RRQHMQKLRK…NSTSLQEGTT (70 aa)) is disordered. A compositionally biased stretch (low complexity) spans 666–680 (SPPSDQESPPSSETS). Over residues 681–690 (IRFQVNTEDS) the composition is skewed to polar residues. Residues 698–707 (QTHKPLKPAL) are compositionally biased toward basic residues. Polar residues predominate over residues 711 to 722 (PSNSTSLQEGTT). Position 768 is a phosphoserine (serine 768). A CBS 2 domain is found at 800–860 (IDPAPFQLVE…GSVTAQGVKV (61 aa)). A Basolateral membrane sorting motif is present at residues 822–823 (LL). The disordered stretch occupies residues 866–908 (SFRDSATSSSDTETTEVHALWGPRSRHGLPREGTPSDSDDKCQ).

Belongs to the chloride channel (TC 2.A.49) family. ClC-2/CLCN2 subfamily. As to quaternary structure, homodimer. Interacts with auxiliary subunit HEPACAM. Phosphorylated. Activated by dephosphorylation. Expressed in the adrenal gland and brain. Expressed in intestinal epithelium (at protein level). Expressed in salivary gland (at protein level).

The protein resides in the cell membrane. It is found in the myelin membrane. It localises to the basolateral cell membrane. Its subcellular location is the cell projection. The protein localises to the dendritic spine membrane. The protein resides in the axon. It catalyses the reaction chloride(in) = chloride(out). The catalysed reaction is thiocyanate(in) = thiocyanate(out). It carries out the reaction bromide(in) = bromide(out). The enzyme catalyses nitrate(in) = nitrate(out). It catalyses the reaction iodide(out) = iodide(in). With respect to regulation, common gate kinetics are down-regulated by intracellular ATP. Inhibited by AK-42, a derivative of meclofenamate. Inhibited by Cd(2+). Inhibited by Zn(2+) and PKC activation. Inhibited at acidic pH. CCLN2:HEPACAM channel conductance is up-regulated upon hypo-osmolarity. Its function is as follows. Voltage-gated and osmosensitive chloride channel. Forms a homodimeric channel where each subunit has its own ion conduction pathway. Conducts double-barreled currents controlled by two types of gates, two fast glutamate gates that control each subunit independently and a slow common gate that opens and shuts off both subunits simultaneously. Displays inward rectification currents activated upon membrane hyperpolarization and extracellular hypotonicity. Contributes to chloride conductance involved in neuron excitability. In hippocampal neurons, generates a significant part of resting membrane conductance and provides an additional chloride efflux pathway to prevent chloride accumulation in dendrites upon GABA receptor activation. In glia, associates with the auxiliary subunit HEPACAM/GlialCAM at astrocytic processes and myelinated fiber tracts where it may regulate transcellular chloride flux buffering extracellular chloride and potassium concentrations. Regulates aldosterone production in adrenal glands. The opening of CLCN2 channels at hyperpolarized membrane potentials in the glomerulosa causes cell membrane depolarization, activation of voltage-gated calcium channels and increased expression of aldosterone synthase, the rate-limiting enzyme for aldosterone biosynthesis. Contributes to chloride conductance in retinal pigment epithelium involved in phagocytosis of shed photoreceptor outer segments and photoreceptor renewal. Conducts chloride currents at the basolateral membrane of epithelial cells with a role in chloride reabsorption rather than secretion. Permeable to small monovalent anions with chloride &gt; thiocyanate &gt; bromide &gt; nitrate &gt; iodide ion selectivity. This chain is Chloride channel protein 2 (Clcn2), found in Mus musculus (Mouse).